The primary structure comprises 321 residues: 5,10-methylenetetrahydromethanopterin reductase (321 aa).

The protein belongs to the mer family.

Its subcellular location is the cytoplasm. It catalyses the reaction 5-methyl-5,6,7,8-tetrahydromethanopterin + oxidized coenzyme F420-(gamma-L-Glu)(n) + H(+) = 5,10-methylenetetrahydromethanopterin + reduced coenzyme F420-(gamma-L-Glu)(n). Its pathway is one-carbon metabolism; methanogenesis from CO(2); methyl-coenzyme M from 5,10-methylene-5,6,7,8-tetrahydromethanopterin: step 1/2. Catalyzes the reversible reduction of methylene-H(4)MPT to methyl-H(4)MPT. This Methanothermobacter thermautotrophicus (strain ATCC 29096 / DSM 1053 / JCM 10044 / NBRC 100330 / Delta H) (Methanobacterium thermoautotrophicum) protein is 5,10-methylenetetrahydromethanopterin reductase.